The sequence spans 289 residues: ATP synthase mitochondrial F1 complex assembly factor 2 (289 aa).

The transit peptide at 1 to 40 (MWRSCLRLRDGGRRLLNRPAGGPSASMSPGPTIPSPARAY) directs the protein to the mitochondrion. A disordered region spans residues 13–40 (RRLLNRPAGGPSASMSPGPTIPSPARAY). The residue at position 133 (Lys-133) is an N6-succinyllysine.

This sequence belongs to the ATP12 family. Interacts with ATP5F1B; involved in the assembly of the F1 component of the mitochondrial ATP synthase (ATPase). Interacts with FMC1. Widely expressed.

The protein resides in the mitochondrion inner membrane. Plays a role in the assembly of the F1 component of the mitochondrial ATP synthase (ATPase). This is ATP synthase mitochondrial F1 complex assembly factor 2 from Homo sapiens (Human).